The primary structure comprises 246 residues: NAD-dependent protein deacylase (246 aa).

Residues 1–237 form the Deacetylase sirtuin-type domain; the sequence is MSLPYRHVVI…PRLVEEILAA (237 aa). NAD(+) is bound at residue 13-32; it reads GAGISAESGIQTFRAQDGLW. Residues Y57 and R60 each coordinate substrate. 94–97 contributes to the NAD(+) binding site; the sequence is QNID. H112 serves as the catalytic Proton acceptor. Positions 120 and 139 each coordinate Zn(2+). Residues 179–181, 205–207, and A223 each bind NAD(+); these read GTS and NLE.

The protein belongs to the sirtuin family. Class III subfamily. The cofactor is Zn(2+).

It is found in the cytoplasm. It carries out the reaction N(6)-acetyl-L-lysyl-[protein] + NAD(+) + H2O = 2''-O-acetyl-ADP-D-ribose + nicotinamide + L-lysyl-[protein]. The enzyme catalyses N(6)-succinyl-L-lysyl-[protein] + NAD(+) + H2O = 2''-O-succinyl-ADP-D-ribose + nicotinamide + L-lysyl-[protein]. Functionally, NAD-dependent lysine deacetylase and desuccinylase that specifically removes acetyl and succinyl groups on target proteins. Modulates the activities of several proteins which are inactive in their acylated form. In Vibrio cholerae serotype O1 (strain ATCC 39315 / El Tor Inaba N16961), this protein is NAD-dependent protein deacylase.